The chain runs to 433 residues: uncharacterized protein (433 aa).

The 246-residue stretch at 104–349 (ERGRNIIQVR…ELEYKKKGIE (246 aa)) folds into the Radical SAM core domain. Residues C118, C122, and C125 each contribute to the [4Fe-4S] cluster site. S-adenosyl-L-methionine contacts are provided by residues 171-172 (GE) and 236-238 (MLS). A TRAM domain is found at 370–433 (PFKVGEVTKV…KDNIIVAELV (64 aa)).

Belongs to the radical SAM superfamily. Requires [4Fe-4S] cluster as cofactor.

This is an uncharacterized protein from Methanocaldococcus jannaschii (strain ATCC 43067 / DSM 2661 / JAL-1 / JCM 10045 / NBRC 100440) (Methanococcus jannaschii).